A 71-amino-acid polypeptide reads, in one-letter code: UPF0352 protein Swoo_2786 (71 aa).

It belongs to the UPF0352 family.

In Shewanella woodyi (strain ATCC 51908 / MS32), this protein is UPF0352 protein Swoo_2786.